Here is a 348-residue protein sequence, read N- to C-terminus: Phenylalanine--tRNA ligase alpha subunit (348 aa).

A Mg(2+)-binding site is contributed by glutamate 259.

Belongs to the class-II aminoacyl-tRNA synthetase family. Phe-tRNA synthetase alpha subunit type 1 subfamily. Tetramer of two alpha and two beta subunits. Mg(2+) serves as cofactor.

It is found in the cytoplasm. It carries out the reaction tRNA(Phe) + L-phenylalanine + ATP = L-phenylalanyl-tRNA(Phe) + AMP + diphosphate + H(+). The protein is Phenylalanine--tRNA ligase alpha subunit of Lactiplantibacillus plantarum (strain ATCC BAA-793 / NCIMB 8826 / WCFS1) (Lactobacillus plantarum).